Consider the following 385-residue polypeptide: V-type proton ATPase subunit C (385 aa).

The protein belongs to the V-ATPase C subunit family. In terms of assembly, V-ATPase is a heteromultimeric enzyme made up of two complexes: the ATP-hydrolytic V1 complex and the proton translocation V0 complex. The V1 complex consists of three catalytic AB heterodimers that form a heterohexamer, three peripheral stalks each consisting of EG heterodimers, one central rotor including subunits D and F, and the regulatory subunits C and H. The proton translocation complex V0 consists of the proton transport subunit a, a ring of proteolipid subunits c9c'', rotary subunit d, subunits e and f, and the accessory subunits VhaAC45 and ATP6AP2.

Subunit of the V1 complex of vacuolar(H+)-ATPase (V-ATPase), a multisubunit enzyme composed of a peripheral complex (V1) that hydrolyzes ATP and a membrane integral complex (V0) that translocates protons. V-ATPase is responsible for acidifying and maintaining the pH of intracellular compartments and in some cell types, is targeted to the plasma membrane, where it is responsible for acidifying the extracellular environment. Subunit C is necessary for the assembly of the catalytic sector of the enzyme and is likely to have a specific function in its catalytic activity. The polypeptide is V-type proton ATPase subunit C (Manduca sexta (Tobacco hawkmoth)).